The chain runs to 92 residues: Small ribosomal subunit protein uS19c (92 aa).

Belongs to the universal ribosomal protein uS19 family.

It is found in the plastid. It localises to the chloroplast. Functionally, protein S19 forms a complex with S13 that binds strongly to the 16S ribosomal RNA. The chain is Small ribosomal subunit protein uS19c from Vitis vinifera (Grape).